A 640-amino-acid chain; its full sequence is SUMO-activating enzyme subunit 2 (640 aa).

ATP is bound by residues 24-29, Asp-48, 56-59, Lys-72, 95-96, and 117-122; these read GAGGIG, NLNR, SI, and DNRAAR. Positions 158 and 161 each coordinate Zn(2+). Lys-164 participates in a covalent cross-link: Glycyl lysine isopeptide (Lys-Gly) (interchain with G-Cter in SUMO1). The Glycyl thioester intermediate role is filled by Cys-173. Residue Lys-190 forms a Glycyl lysine isopeptide (Lys-Gly) (interchain with G-Cter in SUMO) linkage. Residues 202–231 form a disordered region; sequence ADQEVSPDRADPEAAWEPTEAEARARASNE. Ser-207 bears the Phosphoserine mark. Positions 222–231 are enriched in basic and acidic residues; that stretch reads AEARARASNE. Lys-236 participates in a covalent cross-link: Glycyl lysine isopeptide (Lys-Gly) (interchain with G-Cter in SUMO1); alternate. Glycyl lysine isopeptide (Lys-Gly) (interchain with G-Cter in SUMO2); alternate cross-links involve residues Lys-236 and Lys-257. Glycyl lysine isopeptide (Lys-Gly) (interchain with G-Cter in SUMO); alternate cross-links involve residues Lys-257 and Lys-271. Lys-271 is subject to N6-acetyllysine; alternate. Residue Lys-275 forms a Glycyl lysine isopeptide (Lys-Gly) (interchain with G-Cter in SUMO) linkage. Residue Lys-371 forms a Glycyl lysine isopeptide (Lys-Gly) (interchain with G-Cter in SUMO2) linkage. A Glycyl lysine isopeptide (Lys-Gly) (interchain with G-Cter in SUMO1); alternate cross-link involves residue Lys-420. Lys-420 is covalently cross-linked (Glycyl lysine isopeptide (Lys-Gly) (interchain with G-Cter in SUMO2); alternate). Positions 441 and 444 each coordinate Zn(2+). Ser-507 bears the Phosphoserine mark. Residue Lys-540 forms a Glycyl lysine isopeptide (Lys-Gly) (interchain with G-Cter in SUMO2) linkage. The span at 551-563 shows a compositional bias: basic and acidic residues; the sequence is PEKVGPKQAEDAA. Residues 551 to 640 are disordered; the sequence is PEKVGPKQAE…EELDDVIALD (90 aa). The segment covering 565–582 has biased composition (polar residues); it reads SITNGSDDGAQPSTSTAQ. Positions 583–597 are enriched in acidic residues; the sequence is EQDDVLIVDSDEEDS. Residue Ser-592 is modified to Phosphoserine. The segment covering 606 to 630 has biased composition (basic and acidic residues); that stretch reads EERSRKRKLDEKENLSAKRSRIEQK. Residue Lys-611 forms a Glycyl lysine isopeptide (Lys-Gly) (interchain with G-Cter in SUMO) linkage. Lys-613 is covalently cross-linked (Glycyl lysine isopeptide (Lys-Gly) (interchain with G-Cter in SUMO); alternate). At Lys-613 the chain carries N6-acetyllysine; alternate. Glycyl lysine isopeptide (Lys-Gly) (interchain with G-Cter in SUMO) cross-links involve residues Lys-617 and Lys-623. A compositionally biased stretch (acidic residues) spans 631–640; it reads EELDDVIALD.

It belongs to the ubiquitin-activating E1 family. In terms of assembly, heterodimer of SAE1 and UBA2/SAE2. The heterodimer corresponds to the two domains that are encoded on a single polypeptide chain in ubiquitin-activating enzyme E1. Interacts with UBE2I. In terms of processing, sumoylated with SUMO1 and SUMO2/3 and by UBC9. Sumoylation at Lys-236 inhibits enzymatic activity. Sumoylation at the C-terminal lysine cluster plays an essential role in nuclear trafficking.

The protein localises to the cytoplasm. Its subcellular location is the nucleus. Its pathway is protein modification; protein sumoylation. In terms of biological role, the heterodimer acts as an E1 ligase for SUMO1, SUMO2, SUMO3, and probably SUMO4. It mediates ATP-dependent activation of SUMO proteins followed by formation of a thioester bond between a SUMO protein and a conserved active site cysteine residue on UBA2/SAE2. This is SUMO-activating enzyme subunit 2 (UBA2) from Homo sapiens (Human).